We begin with the raw amino-acid sequence, 190 residues long: Nucleoside triphosphate pyrophosphatase (190 aa).

The Proton acceptor role is filled by D69.

Belongs to the Maf family. A divalent metal cation serves as cofactor.

The protein resides in the cytoplasm. It catalyses the reaction a ribonucleoside 5'-triphosphate + H2O = a ribonucleoside 5'-phosphate + diphosphate + H(+). The catalysed reaction is a 2'-deoxyribonucleoside 5'-triphosphate + H2O = a 2'-deoxyribonucleoside 5'-phosphate + diphosphate + H(+). Functionally, nucleoside triphosphate pyrophosphatase. May have a dual role in cell division arrest and in preventing the incorporation of modified nucleotides into cellular nucleic acids. In Helicobacter pylori (strain Shi470), this protein is Nucleoside triphosphate pyrophosphatase.